We begin with the raw amino-acid sequence, 315 residues long: p-hydroxyphenylacetate 3-hydroxylase, reductase component (315 aa).

Belongs to the non-flavoprotein flavin reductase family. As to quaternary structure, homodimer. The p-hydroxyphenylacetate 3-hydroxylase (HpaH) is composed of an oxygenase component C2 and a reductase component C1.

It catalyses the reaction a reduced flavin + NAD(+) = an oxidized flavin + NADH + 2 H(+). The protein operates within aromatic compound metabolism; 4-hydroxyphenylacetate degradation; pyruvate and succinate semialdehyde from 4-hydroxyphenylacetate: step 1/7. Flavin concentrations greater than 15 uM do not inhibit the NADH oxidation activity of the reductase component C1 but do affect the hydroxylation activity of the C1-C2 complex. Maximal reductase activity is achieved only upon HPA binding to the reductase component C1 before interaction with NADH. HPA stimulates the rates of both the reduction of FMN and release of reduced FMN from the reductase component. In terms of biological role, reductase component of a two-component system that supplies reduced FMN (FMNH2) to the oxygenase component to catalyze the hydroxylation of 4-hydroxyphenylacetic acid, leading to the production of 3,4-dihydroxyphenylacetate (3,4-DHPA). Catalyzes the reduction of free flavins (FMN, FAD and riboflavin) by NADH. Subsequently, the reduced flavins diffuse to the oxygenase component C2. In Acinetobacter baumannii, this protein is p-hydroxyphenylacetate 3-hydroxylase, reductase component.